The following is a 436-amino-acid chain: L-threonine dehydratase biosynthetic IlvA (436 aa).

A catalytic region spans residues 1 to 357 (MSETYVSEKS…HRGLKHYFLV (357 aa)). Residue Lys-70 is modified to N6-(pyridoxal phosphate)lysine. Pyridoxal 5'-phosphate-binding positions include Asn-97, 203–207 (GGGGL), and Ser-329. The ACT-like domain occupies 353-427 (HYFLVNFPQK…SAIDSRRLEP (75 aa)). Residues 358-436 (NFPQKPGQLR…PGTPEYEYLT (79 aa)) form a regulatory region.

The protein belongs to the serine/threonine dehydratase family. In terms of assembly, homotetramer. It depends on pyridoxal 5'-phosphate as a cofactor.

The catalysed reaction is L-threonine = 2-oxobutanoate + NH4(+). Its pathway is amino-acid biosynthesis; L-isoleucine biosynthesis; 2-oxobutanoate from L-threonine: step 1/1. In terms of biological role, catalyzes the anaerobic formation of alpha-ketobutyrate and ammonia from threonine in a two-step reaction. The first step involved a dehydration of threonine and a production of enamine intermediates (aminocrotonate), which tautomerizes to its imine form (iminobutyrate). Both intermediates are unstable and short-lived. The second step is the nonenzymatic hydrolysis of the enamine/imine intermediates to form 2-ketobutyrate and free ammonia. In the low water environment of the cell, the second step is accelerated by RidA. This Corynebacterium glutamicum (strain ATCC 13032 / DSM 20300 / JCM 1318 / BCRC 11384 / CCUG 27702 / LMG 3730 / NBRC 12168 / NCIMB 10025 / NRRL B-2784 / 534) protein is L-threonine dehydratase biosynthetic IlvA (ilvA).